A 139-amino-acid chain; its full sequence is D-ribose pyranase (139 aa).

H20 acts as the Proton donor in catalysis. Substrate contacts are provided by residues D28, H106, and 128–130 (YAN).

This sequence belongs to the RbsD / FucU family. RbsD subfamily. Homodecamer.

Its subcellular location is the cytoplasm. The catalysed reaction is beta-D-ribopyranose = beta-D-ribofuranose. Its pathway is carbohydrate metabolism; D-ribose degradation; D-ribose 5-phosphate from beta-D-ribopyranose: step 1/2. Its function is as follows. Catalyzes the interconversion of beta-pyran and beta-furan forms of D-ribose. This Pectobacterium atrosepticum (strain SCRI 1043 / ATCC BAA-672) (Erwinia carotovora subsp. atroseptica) protein is D-ribose pyranase.